The following is a 120-amino-acid chain: Prophage bactoprenol-linked glucose translocase homolog (120 aa).

At 1–9 the chain is on the cytoplasmic side; sequence MLKLFAKYT. A helical membrane pass occupies residues 10-30; sequence SIGVLNTLIHWVVFGVCIYVA. Over 31 to 33 the chain is Periplasmic; sequence HTN. A helical transmembrane segment spans residues 34–54; that stretch reads QALANFAGFVVAVSFSFFANA. The Cytoplasmic portion of the chain corresponds to 55 to 64; sequence KFTFKASTTT. A helical transmembrane segment spans residues 65 to 85; that stretch reads MRYMLYVGFMGTLSATVGWAA. The Periplasmic portion of the chain corresponds to 86 to 88; it reads DRC. Residues 89-109 traverse the membrane as a helical segment; that stretch reads ALPPMITLVTFSAISLVCGFV. At 110–120 the chain is on the cytoplasmic side; sequence YSKFIVFRDAK.

It belongs to the GtrA family.

The protein localises to the cell inner membrane. Involved in O antigen modification. Involved in the translocation of bactoprenol-linked glucose across the cytoplasmic membrane. The sequence is that of Prophage bactoprenol-linked glucose translocase homolog (yfdG) from Escherichia coli (strain K12).